The chain runs to 604 residues: Aspartate--tRNA(Asp/Asn) ligase (604 aa).

L-aspartate is bound at residue E187. Residues 211–214 (QQFK) form an aspartate region. L-aspartate contacts are provided by R233 and H461. 233 to 235 (RDE) serves as a coordination point for ATP. E495 lines the ATP pocket. R502 serves as a coordination point for L-aspartate. 547–550 (GLDR) contacts ATP.

The protein belongs to the class-II aminoacyl-tRNA synthetase family. Type 1 subfamily. Homodimer.

The protein resides in the cytoplasm. The catalysed reaction is tRNA(Asx) + L-aspartate + ATP = L-aspartyl-tRNA(Asx) + AMP + diphosphate. In terms of biological role, aspartyl-tRNA synthetase with relaxed tRNA specificity since it is able to aspartylate not only its cognate tRNA(Asp) but also tRNA(Asn). Reaction proceeds in two steps: L-aspartate is first activated by ATP to form Asp-AMP and then transferred to the acceptor end of tRNA(Asp/Asn). This chain is Aspartate--tRNA(Asp/Asn) ligase, found in Chlorobium luteolum (strain DSM 273 / BCRC 81028 / 2530) (Pelodictyon luteolum).